A 29-amino-acid polypeptide reads, in one-letter code: Trypsin inhibitor 1 (29 aa).

Cystine bridges form between Cys-3-Cys-20, Cys-10-Cys-22, and Cys-16-Cys-28.

Belongs to the protease inhibitor I7 (squash-type serine protease inhibitor) family.

It localises to the secreted. Functionally, inhibits trypsin. The chain is Trypsin inhibitor 1 from Cucurbita maxima (Pumpkin).